Consider the following 491-residue polypeptide: Carboxypeptidase SOL1 (491 aa).

The signal sequence occupies residues 1-25; that stretch reads MSKLRFFQSLLISTVICFFLPSINA. The Extracellular portion of the chain corresponds to 26–452; the sequence is RGGHSDHIHP…LLTQFFTETN (427 aa). Asn39 is a glycosylation site (N-linked (GlcNAc...) asparagine). Residues 64-338 enclose the Peptidase M14 domain; that stretch reads GYMTNDDLEK…KSMLNLVASL (275 aa). Zn(2+)-binding residues include His125 and Glu128. Substrate is bound by residues 125 to 128 and 186 to 187; these read HGDE and NR. His226 is a binding site for Zn(2+). N-linked (GlcNAc...) asparagine glycosylation occurs at Asn268. Residue Tyr286 participates in substrate binding. The active-site Proton donor/acceptor is Glu308. The helical transmembrane segment at 453–470 threads the bilayer; that stretch reads NGITLTLFVVVVFLCFLL. Over 471 to 491 the chain is Cytoplasmic; the sequence is QRRVRFNLWKQRQSSRRSITV.

The protein belongs to the peptidase M14 family. Zn(2+) is required as a cofactor. Expressed in roots, shoots, leaves, flowers and siliques.

Its subcellular location is the endosome membrane. Possesses in vitro carboxypeptidase activity against the C-terminal arginine and lysine residues. Involved in the maturation of CLE19. Removes the C-terminal arginine residue of CLE19 proprotein. The cleavage of the C-terminal arginine residue is necessary for CLE19 activity in vivo. Is not involved in generating active CLV3. Is not involved in CLE19 or CLV3 perception. This chain is Carboxypeptidase SOL1, found in Arabidopsis thaliana (Mouse-ear cress).